The primary structure comprises 223 residues: Small ribosomal subunit protein uS11m (223 aa).

The transit peptide at 1–38 (MVLKHSVTYNLSFFISFTFSSIFFSSLILFLVYKSVLS) directs the protein to the mitochondrion.

Belongs to the universal ribosomal protein uS11 family. Component of the mitochondrial small ribosomal subunit (mt-SSU). Mature yeast 74S mitochondrial ribosomes consist of a small (37S) and a large (54S) subunit. The 37S small subunit contains a 15S ribosomal RNA (15S mt-rRNA) and at least 32 different proteins. The 54S large subunit contains a 21S rRNA (21S mt-rRNA) and at least 45 different proteins.

It localises to the mitochondrion. Component of the mitochondrial ribosome (mitoribosome), a dedicated translation machinery responsible for the synthesis of mitochondrial genome-encoded proteins, including at least some of the essential transmembrane subunits of the mitochondrial respiratory chain. The mitoribosomes are attached to the mitochondrial inner membrane and translation products are cotranslationally integrated into the membrane. The polypeptide is Small ribosomal subunit protein uS11m (mrps18) (Schizosaccharomyces pombe (strain 972 / ATCC 24843) (Fission yeast)).